The chain runs to 261 residues: Cytochrome c oxidase subunit 3 (261 aa).

Topologically, residues 1-15 (MTHQTHAYHMVNPSP) are mitochondrial matrix. A helical membrane pass occupies residues 16 to 34 (WPLTGALSALLMTSGLIMW). The Mitochondrial intermembrane segment spans residues 35–40 (FHFNST). The helical transmembrane segment at 41 to 66 (ILLMLGLTTNMLTMYQWWRDIIREST) threads the bilayer. The Mitochondrial matrix segment spans residues 67 to 72 (FQGHHT). The chain crosses the membrane as a helical span at residues 73 to 105 (PTVQKGLRYGMILFIISEVLFFTGFFWAFYHSS). The Mitochondrial intermembrane segment spans residues 106–128 (LAPTPELGGCWPPTGIHPLNPLE). Residues 129-152 (VPLLNTSVLLASGVSITWAHHSLM) traverse the membrane as a helical segment. Over 153-155 (EGN) the chain is Mitochondrial matrix. Residues 156-183 (RNHMLQALFITIALGVYFTLLQASEYYE) form a helical membrane-spanning segment. The Mitochondrial intermembrane segment spans residues 184-190 (APFTISD). The chain crosses the membrane as a helical span at residues 191–223 (GVYGSTFFVATGFHGLHVIIGSTFLIVCFFRQL). Residues 224–232 (KFHFTSSHH) lie on the Mitochondrial matrix side of the membrane. Residues 233–256 (FGFEAAAWYWHFVDVVWLFLYVSI) form a helical membrane-spanning segment. Topologically, residues 257-261 (YWWGS) are mitochondrial intermembrane.

It belongs to the cytochrome c oxidase subunit 3 family. Component of the cytochrome c oxidase (complex IV, CIV), a multisubunit enzyme composed of 14 subunits. The complex is composed of a catalytic core of 3 subunits MT-CO1, MT-CO2 and MT-CO3, encoded in the mitochondrial DNA, and 11 supernumerary subunits COX4I, COX5A, COX5B, COX6A, COX6B, COX6C, COX7A, COX7B, COX7C, COX8 and NDUFA4, which are encoded in the nuclear genome. The complex exists as a monomer or a dimer and forms supercomplexes (SCs) in the inner mitochondrial membrane with NADH-ubiquinone oxidoreductase (complex I, CI) and ubiquinol-cytochrome c oxidoreductase (cytochrome b-c1 complex, complex III, CIII), resulting in different assemblies (supercomplex SCI(1)III(2)IV(1) and megacomplex MCI(2)III(2)IV(2)).

It is found in the mitochondrion inner membrane. It carries out the reaction 4 Fe(II)-[cytochrome c] + O2 + 8 H(+)(in) = 4 Fe(III)-[cytochrome c] + 2 H2O + 4 H(+)(out). In terms of biological role, component of the cytochrome c oxidase, the last enzyme in the mitochondrial electron transport chain which drives oxidative phosphorylation. The respiratory chain contains 3 multisubunit complexes succinate dehydrogenase (complex II, CII), ubiquinol-cytochrome c oxidoreductase (cytochrome b-c1 complex, complex III, CIII) and cytochrome c oxidase (complex IV, CIV), that cooperate to transfer electrons derived from NADH and succinate to molecular oxygen, creating an electrochemical gradient over the inner membrane that drives transmembrane transport and the ATP synthase. Cytochrome c oxidase is the component of the respiratory chain that catalyzes the reduction of oxygen to water. Electrons originating from reduced cytochrome c in the intermembrane space (IMS) are transferred via the dinuclear copper A center (CU(A)) of subunit 2 and heme A of subunit 1 to the active site in subunit 1, a binuclear center (BNC) formed by heme A3 and copper B (CU(B)). The BNC reduces molecular oxygen to 2 water molecules using 4 electrons from cytochrome c in the IMS and 4 protons from the mitochondrial matrix. In Aepyceros melampus (Impala), this protein is Cytochrome c oxidase subunit 3 (MT-CO3).